The primary structure comprises 110 residues: Antimicrobial peptide microplusin (110 aa).

The N-terminal stretch at 1–20 (MKAIFVSALLVVALVASTSA) is a signal peptide. Cystine bridges form between Cys-26–Cys-72, Cys-39–Cys-100, and Cys-61–Cys-66.

Expressed in the hemocytes, fat body and ovaries.

Its subcellular location is the secreted. In terms of biological role, has bacteriostatic activity against the Gram-positive bacterium M.luteus, but not against Gram-negative bacterium E.coli SBS363. Has fungistatic activity against C.neoformans, but not C.albicans. Binds and sequesters copper and iron ions. Copper-chelating is crucial for antimicrobial activity against M.luteus. This chain is Antimicrobial peptide microplusin, found in Rhipicephalus microplus (Cattle tick).